An 87-amino-acid chain; its full sequence is Small ribosomal subunit protein bS20 (87 aa).

Residues Met-1–Ala-22 show a composition bias toward basic residues. The disordered stretch occupies residues Met-1 to Met-27.

It belongs to the bacterial ribosomal protein bS20 family.

Its function is as follows. Binds directly to 16S ribosomal RNA. This Pectobacterium atrosepticum (strain SCRI 1043 / ATCC BAA-672) (Erwinia carotovora subsp. atroseptica) protein is Small ribosomal subunit protein bS20.